The chain runs to 243 residues: Segregation and condensation protein A (243 aa).

The protein belongs to the ScpA family. Component of a cohesin-like complex composed of ScpA, ScpB and the Smc homodimer, in which ScpA and ScpB bind to the head domain of Smc. The presence of the three proteins is required for the association of the complex with DNA.

It localises to the cytoplasm. Its function is as follows. Participates in chromosomal partition during cell division. May act via the formation of a condensin-like complex containing Smc and ScpB that pull DNA away from mid-cell into both cell halves. The protein is Segregation and condensation protein A of Thermoanaerobacter pseudethanolicus (strain ATCC 33223 / 39E) (Clostridium thermohydrosulfuricum).